A 28-amino-acid polypeptide reads, in one-letter code: NLIQLSNMIKCAIPGSRPLFQYTDYGCY.

A Ca(2+)-binding site is contributed by tyrosine 28.

The protein belongs to the phospholipase A2 family. Group I subfamily. Ca(2+) is required as a cofactor. Expressed by the venom gland.

It localises to the secreted. The enzyme catalyses a 1,2-diacyl-sn-glycero-3-phosphocholine + H2O = a 1-acyl-sn-glycero-3-phosphocholine + a fatty acid + H(+). Its function is as follows. PLA2 catalyzes the calcium-dependent hydrolysis of the 2-acyl groups in 3-sn-phosphoglycerides. This chain is Phospholipase A2 pseudexin C chain, found in Pseudechis porphyriacus (Red-bellied black snake).